A 285-amino-acid polypeptide reads, in one-letter code: Protoheme IX farnesyltransferase (285 aa).

Transmembrane regions (helical) follow at residues 16 to 36, 40 to 60, 106 to 126, 136 to 156, 165 to 185, 217 to 237, and 265 to 285; these read AKPK…ILAF, WYNL…SMII, LLAN…YVFV, WLNI…GYAA, SLLL…ALAL, ILMI…YVII, and YKFS…SFIL.

This sequence belongs to the UbiA prenyltransferase family. Protoheme IX farnesyltransferase subfamily.

Its subcellular location is the cell membrane. It carries out the reaction heme b + (2E,6E)-farnesyl diphosphate + H2O = Fe(II)-heme o + diphosphate. It participates in porphyrin-containing compound metabolism; heme O biosynthesis; heme O from protoheme: step 1/1. In terms of biological role, converts heme B (protoheme IX) to heme O by substitution of the vinyl group on carbon 2 of heme B porphyrin ring with a hydroxyethyl farnesyl side group. The polypeptide is Protoheme IX farnesyltransferase (Sulfolobus acidocaldarius (strain ATCC 33909 / DSM 639 / JCM 8929 / NBRC 15157 / NCIMB 11770)).